The following is a 178-amino-acid chain: NADPH azoreductase (178 aa).

Position 106–111 (106–111) interacts with NADP(+); the sequence is GGGKGG.

This sequence belongs to the azoreductase type 2 family. Monomer.

It carries out the reaction N,N-dimethyl-1,4-phenylenediamine + aniline + 2 NADP(+) = 4-(dimethylamino)azobenzene + 2 NADPH + 2 H(+). Its function is as follows. Catalyzes the reductive cleavage of azo bond in aromatic azo compounds to the corresponding amines. Requires NADPH as an electron donor for its activity. Compounds with paired naphthalene groups coupled with the azo group are good substrates, with the following preference order: Rocceline &gt; Sumifix Black B &gt; Solar Orange. The polypeptide is NADPH azoreductase (azr) (Bacillus sp. (strain OY1-2)).